The chain runs to 513 residues: Secreted LysM effector Vd6LysM (513 aa).

Positions 1–19 (MSFIKSLLLAAAAVASVSA) are cleaved as a signal peptide. LysM domains lie at 38–85 (SYWV…SYCV), 136–182 (KFHW…NVCV), 219–265 (KFHW…QVCV), and 302–348 (KFHW…QVCV). A compositionally biased stretch (low complexity) spans 357–367 (TTTRPPTTTAP). Residues 357–377 (TTTRPPTTTAPGNGVSTPQPT) are disordered. LysM domains lie at 387–433 (KFHW…NVCV) and 465–511 (KFHW…NVCV).

Belongs to the secreted LysM effector family.

In terms of biological role, might have a role in sequestration of chitin oligosaccharides (breakdown products of fungal cell walls that are released during invasion and act as triggers of host immunity) to dampen host defense. Does not play an important role during host colonization. The sequence is that of Secreted LysM effector Vd6LysM from Verticillium dahliae (strain VdLs.17 / ATCC MYA-4575 / FGSC 10137) (Verticillium wilt).